The primary structure comprises 175 residues: Secretion monitor (175 aa).

Residues 1-38 (MSIINFWRQFGRRYFWSHLLLGMVAAGIGMPSLVSAHA) form the signal peptide.

It belongs to the SecM family.

The protein resides in the cytoplasm. It is found in the cytosol. The protein localises to the periplasm. Functionally, regulates secA expression by translational coupling of the secM secA operon. Translational pausing at a specific Pro residue 5 residues before the end of the protein may allow disruption of a mRNA repressor helix that normally suppresses secA translation initiation. This chain is Secretion monitor, found in Proteus mirabilis (strain HI4320).